Consider the following 379-residue polypeptide: Cytochrome b (379 aa).

4 helical membrane-spanning segments follow: residues 33 to 53 (FGSLLGMCLMIQILTGLFLAM), 77 to 98 (WLIRYLHANGASMFFICLFIHV), 113 to 133 (WNIGIILFLTTMATAFVGYVL), and 178 to 198 (FFAFHFILPFIITAFVLVHLL). Heme b contacts are provided by histidine 83 and histidine 97. 2 residues coordinate heme b: histidine 182 and histidine 196. Position 201 (histidine 201) interacts with a ubiquinone. A run of 4 helical transmembrane segments spans residues 226–246 (IKDLLGILFLLTALMILALFF), 288–308 (LGGVLALLLSILILMAFPLLN), 320–340 (ITQTIYWILIANLLVLTWIGG), and 347–367 (FTMIGQIASITYFAIILILMP).

The protein belongs to the cytochrome b family. As to quaternary structure, the cytochrome bc1 complex contains 11 subunits: 3 respiratory subunits (MT-CYB, CYC1 and UQCRFS1), 2 core proteins (UQCRC1 and UQCRC2) and 6 low-molecular weight proteins (UQCRH/QCR6, UQCRB/QCR7, UQCRQ/QCR8, UQCR10/QCR9, UQCR11/QCR10 and a cleavage product of UQCRFS1). This cytochrome bc1 complex then forms a dimer. Requires heme b as cofactor.

The protein resides in the mitochondrion inner membrane. Its function is as follows. Component of the ubiquinol-cytochrome c reductase complex (complex III or cytochrome b-c1 complex) that is part of the mitochondrial respiratory chain. The b-c1 complex mediates electron transfer from ubiquinol to cytochrome c. Contributes to the generation of a proton gradient across the mitochondrial membrane that is then used for ATP synthesis. The protein is Cytochrome b (MT-CYB) of Akodon dolores (Dolorous grass mouse).